Consider the following 673-residue polypeptide: tRNA 5-methylaminomethyl-2-thiouridine biosynthesis bifunctional protein MnmC (673 aa).

Positions 1–245 are tRNA (mnm(5)s(2)U34)-methyltransferase; the sequence is MSHAPIQTAA…KREMLIGELP (245 aa). The interval 272 to 673 is FAD-dependent cmnm(5)s(2)U34 oxidoreductase; sequence IGGGVASALT…VRKLLKGRAV (402 aa).

It in the N-terminal section; belongs to the methyltransferase superfamily. tRNA (mnm(5)s(2)U34)-methyltransferase family. The protein in the C-terminal section; belongs to the DAO family. The cofactor is FAD.

It localises to the cytoplasm. The catalysed reaction is 5-aminomethyl-2-thiouridine(34) in tRNA + S-adenosyl-L-methionine = 5-methylaminomethyl-2-thiouridine(34) in tRNA + S-adenosyl-L-homocysteine + H(+). Catalyzes the last two steps in the biosynthesis of 5-methylaminomethyl-2-thiouridine (mnm(5)s(2)U) at the wobble position (U34) in tRNA. Catalyzes the FAD-dependent demodification of cmnm(5)s(2)U34 to nm(5)s(2)U34, followed by the transfer of a methyl group from S-adenosyl-L-methionine to nm(5)s(2)U34, to form mnm(5)s(2)U34. The sequence is that of tRNA 5-methylaminomethyl-2-thiouridine biosynthesis bifunctional protein MnmC from Serratia proteamaculans (strain 568).